The primary structure comprises 133 residues: uncharacterized protein (133 aa).

Transmembrane regions (helical) follow at residues 5 to 27 (KLFF…FSLI), 42 to 64 (IAWN…YSLY), 77 to 99 (ALIS…TFSS), and 103 to 125 (LVWW…LLLK).

Its subcellular location is the cell membrane. This is an uncharacterized protein from Bacillus subtilis (strain 168).